The sequence spans 63 residues: MHCLSVFVILLLLTASAPSVDAQPKTEDDVPLSSFHDDLQRTVRTLLDIRMCCLGTSGCCPWG.

Positions 1-22 (MHCLSVFVILLLLTASAPSVDA) are cleaved as a signal peptide. The propeptide occupies 23-50 (QPKTEDDVPLSSFHDDLQRTVRTLLDIR). Trp62 carries the tryptophan amide modification.

It belongs to the conotoxin T superfamily. In terms of processing, contains 2 disulfide bonds that can be either 'C1-C3, C2-C4' or 'C1-C4, C2-C3', since these disulfide connectivities have been observed for conotoxins with cysteine framework V (for examples, see AC P0DQQ7 and AC P81755). In terms of tissue distribution, expressed by the venom duct.

It localises to the secreted. The chain is Conotoxin PnMRCL-0111 from Conus pennaceus (Feathered cone).